Consider the following 338-residue polypeptide: Limbic system-associated membrane protein (338 aa).

Positions 1–28 (MVARAQPDRKQLPLVLLRLLCLLPTGLP) are cleaved as a signal peptide. Ig-like C2-type domains lie at 29-122 (VRSV…PKTS), 132-214 (PKIS…VRVT), and 219-306 (PTIT…LYLY). 4 N-linked (GlcNAc...) asparagine glycosylation sites follow: Asn-40, Asn-66, Asn-136, and Asn-148. The cysteines at positions 53 and 111 are disulfide-linked. 2 cysteine pairs are disulfide-bonded: Cys-153/Cys-197 and Cys-239/Cys-290. Residues Asn-279, Asn-287, Asn-300, and Asn-315 are each glycosylated (N-linked (GlcNAc...) asparagine). Residue Asn-315 is the site of GPI-anchor amidated asparagine attachment. A propeptide spans 316-338 (GSVSLAVPLWLLAASLLCLLSKC) (removed in mature form).

The protein belongs to the immunoglobulin superfamily. IgLON family.

Its subcellular location is the cell membrane. Its function is as follows. Mediates selective neuronal growth and axon targeting. Probably serves as a recognition molecule for the formation of limbic connections. In Gallus gallus (Chicken), this protein is Limbic system-associated membrane protein.